The sequence spans 123 residues: Mediator of RNA polymerase II transcription subunit 9 (123 aa).

Residues 95 to 123 (WQLHIQEKKIELEKKTKHLQRLRESIQKQ) are a coiled coil.

Belongs to the Mediator complex subunit 9 family. As to quaternary structure, component of the Mediator complex.

It is found in the nucleus. Functionally, component of the Mediator complex, a coactivator involved in the regulated transcription of nearly all RNA polymerase II-dependent genes. Mediator functions as a bridge to convey information from gene-specific regulatory proteins to the basal RNA polymerase II transcription machinery. Mediator is recruited to promoters by direct interactions with regulatory proteins and serves as a scaffold for the assembly of a functional preinitiation complex with RNA polymerase II and the general transcription factors. The sequence is that of Mediator of RNA polymerase II transcription subunit 9 (CSE2) from Kluyveromyces lactis (strain ATCC 8585 / CBS 2359 / DSM 70799 / NBRC 1267 / NRRL Y-1140 / WM37) (Yeast).